The sequence spans 267 residues: Acetyl-coenzyme A carboxylase carboxyl transferase subunit beta, chloroplastic (267 aa).

One can recognise a CoA carboxyltransferase N-terminal domain in the interval 12-267 (LWKKCDSCNI…TIHMILDLHN (256 aa)). C16, C19, C35, and C38 together coordinate Zn(2+). A C4-type zinc finger spans residues 16–38 (CDSCNILISKFDFYKHDKVCPEC).

This sequence belongs to the AccD/PCCB family. In terms of assembly, acetyl-CoA carboxylase is a heterohexamer composed of biotin carboxyl carrier protein, biotin carboxylase and 2 subunits each of ACCase subunit alpha and ACCase plastid-coded subunit beta (accD). The cofactor is Zn(2+).

It is found in the plastid. The protein localises to the chloroplast stroma. It catalyses the reaction N(6)-carboxybiotinyl-L-lysyl-[protein] + acetyl-CoA = N(6)-biotinyl-L-lysyl-[protein] + malonyl-CoA. It functions in the pathway lipid metabolism; malonyl-CoA biosynthesis; malonyl-CoA from acetyl-CoA: step 1/1. In terms of biological role, component of the acetyl coenzyme A carboxylase (ACC) complex. Biotin carboxylase (BC) catalyzes the carboxylation of biotin on its carrier protein (BCCP) and then the CO(2) group is transferred by the transcarboxylase to acetyl-CoA to form malonyl-CoA. The protein is Acetyl-coenzyme A carboxylase carboxyl transferase subunit beta, chloroplastic of Cyanidium caldarium (Red alga).